Here is a 340-residue protein sequence, read N- to C-terminus: MSWSRSILCLLGAFANARSIPYYPPLSSDLVNHINKLNTTGRAGHNFHNTDMSYVKKLCGTFLGGPKAPERVDFAEDMDLPDTFDTRKQWPNCPTISEIRDQGSCGSCWAFGAVEAISDRICVHTNAKVSVEVSAEDLLSCCGFECGMGCNGGYPSGAWRYWTERGLVSGGLYDSHVGCRAYTIPPCEHHVNGSRPPCTGEGGETPRCSRHCEPGYSPSYKEDKHYGITSYGVPRSEKEIMAEIYKNGPVEGAFIVYEDFLMYKSGVYQHVSGEQVGGHAIRILGWGVENGTPYWLAANSWNTDWGITGFFKILRGEDHCGIESEIVAGVPRMEQYWTRV.

The first 17 residues, Met1 to Ala17, serve as a signal peptide directing secretion. A propeptide spans Arg18–Asp79 (activation peptide). Asn38 carries an N-linked (GlcNAc...) asparagine glycan. 6 disulfides stabilise this stretch: Cys93–Cys122, Cys105–Cys150, Cys141–Cys208, Cys142–Cys146, Cys179–Cys212, and Cys187–Cys198. Residue Cys108 is part of the active site. N-linked (GlcNAc...) asparagine glycosylation occurs at Asn192. Residues His279 and Asn299 contribute to the active site.

Belongs to the peptidase C1 family. Dimer of a heavy chain and a light chain cross-linked by a disulfide bond.

The protein resides in the lysosome. The enzyme catalyses Hydrolysis of proteins with broad specificity for peptide bonds. Preferentially cleaves -Arg-Arg-|-Xaa bonds in small molecule substrates (thus differing from cathepsin L). In addition to being an endopeptidase, shows peptidyl-dipeptidase activity, liberating C-terminal dipeptides.. Functionally, thiol protease which is believed to participate in intracellular degradation and turnover of proteins. Has also been implicated in tumor invasion and metastasis. In Gallus gallus (Chicken), this protein is Cathepsin B (CTSB).